A 571-amino-acid polypeptide reads, in one-letter code: Polypeptide N-acetylgalactosaminyltransferase 2 (571 aa).

Residues 1 to 6 (MRRRSR) are Cytoplasmic-facing. Residues 7-24 (MLLCFAFLWVLGIAYYMY) traverse the membrane as a helical; Signal-anchor for type II membrane protein segment. Residues 25–571 (SGGGSALAGG…QWKFTLNLQQ (547 aa)) lie on the Lumenal side of the membrane. Serine 29 carries an O-linked (Xyl...) (chondroitin sulfate) serine glycan. The segment covering 53–66 (KKDLHHSNGEEKAQ) has biased composition (basic and acidic residues). Residues 53-74 (KKDLHHSNGEEKAQSMETLPPG) form a disordered region. 4 disulfides stabilise this stretch: cysteine 126–cysteine 354, cysteine 345–cysteine 423, cysteine 456–cysteine 473, and cysteine 496–cysteine 513. The segment at 135–240 (LPATSVVITF…EHWLEPLLER (106 aa)) is catalytic subdomain A. Residues threonine 143, aspartate 176, and arginine 201 each coordinate substrate. Aspartate 224 is a binding site for Mn(2+). A substrate-binding site is contributed by serine 225. Histidine 226 serves as a coordination point for Mn(2+). Residues 300–362 (PIKTPMIAGG…PCSRVGHVFR (63 aa)) are catalytic subdomain B. Tryptophan 331 contributes to the substrate binding site. Histidine 359 provides a ligand contact to Mn(2+). Residues arginine 362, histidine 365, and tyrosine 367 each coordinate substrate. The 124-residue stretch at 443–566 (QDIAFGALQQ…PALSQQWKFT (124 aa)) folds into the Ricin B-type lectin domain. Position 536 is a phosphoserine (serine 536). A disulfide bridge connects residues cysteine 539 and cysteine 555.

The protein belongs to the glycosyltransferase 2 family. GalNAc-T subfamily. Mn(2+) is required as a cofactor. As to expression, detected in urine (at protein level). Widely expressed.

The protein resides in the golgi apparatus. The protein localises to the golgi stack membrane. It localises to the secreted. The enzyme catalyses L-seryl-[protein] + UDP-N-acetyl-alpha-D-galactosamine = a 3-O-[N-acetyl-alpha-D-galactosaminyl]-L-seryl-[protein] + UDP + H(+). The catalysed reaction is L-threonyl-[protein] + UDP-N-acetyl-alpha-D-galactosamine = a 3-O-[N-acetyl-alpha-D-galactosaminyl]-L-threonyl-[protein] + UDP + H(+). It functions in the pathway protein modification; protein glycosylation. Its function is as follows. Catalyzes the initial reaction in O-linked oligosaccharide biosynthesis, the transfer of an N-acetyl-D-galactosamine residue to a serine or threonine residue on the protein receptor. Has a broad spectrum of substrates for peptides such as EA2, Muc5AC, Muc1a, Muc1b. Probably involved in O-linked glycosylation of the immunoglobulin A1 (IgA1) hinge region. Involved in O-linked glycosylation of APOC-III, ANGPTL3 and PLTP. It participates in the regulation of HDL-C metabolism. The chain is Polypeptide N-acetylgalactosaminyltransferase 2 (GALNT2) from Homo sapiens (Human).